A 122-amino-acid chain; its full sequence is Large ribosomal subunit protein uL22 (122 aa).

Belongs to the universal ribosomal protein uL22 family. As to quaternary structure, part of the 50S ribosomal subunit.

Functionally, this protein binds specifically to 23S rRNA; its binding is stimulated by other ribosomal proteins, e.g. L4, L17, and L20. It is important during the early stages of 50S assembly. It makes multiple contacts with different domains of the 23S rRNA in the assembled 50S subunit and ribosome. In terms of biological role, the globular domain of the protein is located near the polypeptide exit tunnel on the outside of the subunit, while an extended beta-hairpin is found that lines the wall of the exit tunnel in the center of the 70S ribosome. This is Large ribosomal subunit protein uL22 from Caldicellulosiruptor saccharolyticus (strain ATCC 43494 / DSM 8903 / Tp8T 6331).